We begin with the raw amino-acid sequence, 358 residues long: HTH-type transcriptional regulator IpsA (358 aa).

The HTH lacI-type domain occupies 8–63; it reads GTLASIAAKLGISRTTVSNAYNRPEQLSAELRQRILDTAEDMGYLGPDPVARSLRT. The H-T-H motif DNA-binding region spans 10 to 29; sequence LASIAAKLGISRTTVSNAYN.

In terms of assembly, homodimer.

Its activity is regulated as follows. Myo-inositol causes the dissociation of the IpsA-DNA complex in vitro. In terms of biological role, plays a role in the regulation of cell wall biogenesis. Inositol-dependent transcriptional activator of ino1, which encodes inositol phosphate synthase. Also regulates other target genes, which are most likely involved in the synthesis of inositol-derived cell wall components and mycothiol. Acts by binding to a conserved palindromic motif within the promoter regions. The sequence is that of HTH-type transcriptional regulator IpsA from Corynebacterium glutamicum (strain ATCC 13032 / DSM 20300 / JCM 1318 / BCRC 11384 / CCUG 27702 / LMG 3730 / NBRC 12168 / NCIMB 10025 / NRRL B-2784 / 534).